A 379-amino-acid chain; its full sequence is Cytochrome-c peroxidase IdrP1 (379 aa).

A signal peptide spans 1-24 (MNNRKPLQLSLLVASLAVAFTASA). Cytochrome c domains follow at residues 50–158 (EKIA…DAFK) and 204–355 (TSQK…EALS). Heme c is bound by residues Cys-72, Cys-75, His-76, Cys-219, Cys-222, and His-223.

As to quaternary structure, the iodate reductase (Idr) complex is composed of a molybdopterin-dependent iodate reductase (IdrA and IdrB subunits) and two associated peroxidases (IdrP1 and IdrP2). Heme c is required as a cofactor.

The protein localises to the periplasm. It catalyses the reaction 2 Fe(II)-[cytochrome c] + H2O2 + 2 H(+) = 2 Fe(III)-[cytochrome c] + 2 H2O. In terms of biological role, involved in iodate respiration. Probably reduces the H(2)O(2) produced by IdrA/IdrB to H(2)O, using a reduced cytochrome c as the electron donor. The sequence is that of Cytochrome-c peroxidase IdrP1 from Pseudomonas sp. (strain SCT).